The primary structure comprises 879 residues: Phosphoenolpyruvate carboxylase (879 aa).

Catalysis depends on residues H141 and K546.

It belongs to the PEPCase type 1 family. It depends on Mg(2+) as a cofactor.

The catalysed reaction is oxaloacetate + phosphate = phosphoenolpyruvate + hydrogencarbonate. Forms oxaloacetate, a four-carbon dicarboxylic acid source for the tricarboxylic acid cycle. The polypeptide is Phosphoenolpyruvate carboxylase (Stutzerimonas stutzeri (strain A1501) (Pseudomonas stutzeri)).